Reading from the N-terminus, the 318-residue chain is NF-kappa-B inhibitor alpha (318 aa).

Positions 1-44 (MLSAHRPAEPPAVEGCEPPRKERQGGLLPPDDRHDSGLDSMKEE) are disordered. The segment covering 17-44 (EPPRKERQGGLLPPDDRHDSGLDSMKEE) has biased composition (basic and acidic residues). Residue lysine 21 forms a Glycyl lysine isopeptide (Lys-Gly) (interchain with G-Cter in ubiquitin) linkage. At serine 36 the chain carries Phosphoserine; by IKKA and IKKB. Position 40 is a phosphoserine; by IKKA, IKKB and IKKE (serine 40). Tyrosine 46 is modified (phosphotyrosine; by Tyr-kinases). ANK repeat units lie at residues 114 to 143 (LSQTPLHLAVITDQAEIAEHLLKAGCDLDV), 147 to 176 (RGNTPLHIACQQGSLRSVSVLTQHCQPHHL), 186 to 215 (NGHTCLHLASIQGYLAVVEYLLSLGADVNA), and 220 to 249 (NGRTALHLAVDLQNSDLVSLLVKHGPDVNK).

The protein belongs to the NF-kappa-B inhibitor family. Phosphorylated at Ser-36 and Ser-40 by IKKA/CHUK and IKKB/IKBKB; disables inhibition of NF-kappa-B DNA-binding activity. Phosphorylation at positions 36 and 40 is prerequisite to polyubiquitination and subsequent degradation. Post-translationally, monoubiquitinated at Lys-21 following phosphorylation at Ser-36 and Ser-40. The resulting polyubiquitination leads to protein degradation. In terms of processing, hydroxylated by HIF1AN. Highly expressed in lymph node, thymus followed by liver, brain, muscle, kidney, gastrointestinal and reproductive tract.

The protein localises to the cytoplasm. Its subcellular location is the nucleus. Its function is as follows. Inhibits the activity of dimeric NF-kappa-B/REL complexes by trapping REL (RELA/p65 and NFKB1/p50) dimers in the cytoplasm by masking their nuclear localization signals. On cellular stimulation by immune and pro-inflammatory responses, becomes phosphorylated promoting ubiquitination and degradation, enabling the dimeric RELA to translocate to the nucleus and activate transcription. This is NF-kappa-B inhibitor alpha (NFKBIA) from Gallus gallus (Chicken).